The following is a 149-amino-acid chain: Large ribosomal subunit protein uL13 (149 aa).

It belongs to the universal ribosomal protein uL13 family. Part of the 50S ribosomal subunit.

This protein is one of the early assembly proteins of the 50S ribosomal subunit, although it is not seen to bind rRNA by itself. It is important during the early stages of 50S assembly. This chain is Large ribosomal subunit protein uL13, found in Borrelia hermsii (strain HS1 / DAH).